The primary structure comprises 385 residues: F-box only protein 4 (385 aa).

Residues Ser-11 and Ser-46 each carry the phosphoserine modification. Positions 54-100 (TSALTRLPVDVQLYILSFLSPHDLCQLGSTDHYWNKTIRDPILWRYF) constitute an F-box domain.

As to quaternary structure, homodimer. Part of the SCF (SKP1-CUL1-F-box) E3 ubiquitin-protein ligase complex SCF(FBXO4) formed of CUL1, SKP1, RBX1 and FBXO4. Interacts with TERF1; this interaction is prevented in the presence of GNL3L. Identified in a complex with CRYAB and CCND1. In terms of processing, phosphorylation at Ser-11 varies during the cell cycle. It is low in resting cells and high in the S phase and the G2/M phase of the cell cycle. Phosphorylation is decreased during late G1 phase. Phosphorylation at Ser-11 is important for homodimerization and for optimal ubiquitin ligase activity towards CCND1.

It localises to the cytoplasm. Its pathway is protein modification; protein ubiquitination. Substrate recognition component of a SCF (SKP1-CUL1-F-box protein) E3 ubiquitin-protein ligase complex that mediates the ubiquitination and subsequent proteasomal degradation of target proteins. Promotes ubiquitination of cyclin-D1 (CCND1) and its subsequent proteasomal degradation. However, it does not act as a major regulator of CCND1 stability during the G1/S transition. Recognizes TERF1 and promotes its ubiquitination together with UBE2D1. Promotes ubiquitination of FXR1 following phosphorylation of FXR1 by GSK3B, leading to FXR1 degradation by the proteasome. The chain is F-box only protein 4 from Mus musculus (Mouse).